Here is a 103-residue protein sequence, read N- to C-terminus: Flagellar hook-basal body complex protein FliE (103 aa).

Belongs to the FliE family.

It is found in the bacterial flagellum basal body. This Yersinia pestis protein is Flagellar hook-basal body complex protein FliE.